Here is a 597-residue protein sequence, read N- to C-terminus: Elongation factor 4 (597 aa).

Residues 2 to 184 (NNIRNFSIIA…ALIAKVPPPK (183 aa)) enclose the tr-type G domain. Residues 14 to 19 (DHGKST) and 131 to 134 (NKID) each bind GTP.

This sequence belongs to the TRAFAC class translation factor GTPase superfamily. Classic translation factor GTPase family. LepA subfamily.

It is found in the cell inner membrane. It catalyses the reaction GTP + H2O = GDP + phosphate + H(+). Required for accurate and efficient protein synthesis under certain stress conditions. May act as a fidelity factor of the translation reaction, by catalyzing a one-codon backward translocation of tRNAs on improperly translocated ribosomes. Back-translocation proceeds from a post-translocation (POST) complex to a pre-translocation (PRE) complex, thus giving elongation factor G a second chance to translocate the tRNAs correctly. Binds to ribosomes in a GTP-dependent manner. The protein is Elongation factor 4 of Herminiimonas arsenicoxydans.